The chain runs to 343 residues: MTDVTTIHQPVLLRDCVDLVAPALAKPGSIAVDCTLGLAGHSTAFLKASPNARLIGIDRDTEALALATKRMEMEGLADRFTPVHAAFDDFSQVLSDQGVDKVNAVFMDLGLSSLQIDETERGFSYSHDAPLDMRMDVTQPLTAEQVLAEYSFADLVRIFRAYGEERFSKQIAREIVRRRETEPLTTSGQLNRLVDEVVPQAHRPAGNPAKRVFQALRIEVNGELDKLAGTLPQIANHLAVGGRLVVESYHSLEDKTVKAFMNQGLKVDAPADMPVVPPDMMPFFKELTRGAIKADAEEIANNPRSASVRLRAVELTRPIPARWRKRFDQGADYASMTRQGRRD.

S-adenosyl-L-methionine contacts are provided by residues 39–41, D58, F87, D108, and Q115; that span reads AGH.

This sequence belongs to the methyltransferase superfamily. RsmH family.

The protein localises to the cytoplasm. The catalysed reaction is cytidine(1402) in 16S rRNA + S-adenosyl-L-methionine = N(4)-methylcytidine(1402) in 16S rRNA + S-adenosyl-L-homocysteine + H(+). Functionally, specifically methylates the N4 position of cytidine in position 1402 (C1402) of 16S rRNA. This is Ribosomal RNA small subunit methyltransferase H from Bifidobacterium adolescentis (strain ATCC 15703 / DSM 20083 / NCTC 11814 / E194a).